The sequence spans 444 residues: CCA-adding enzyme (444 aa).

2 residues coordinate ATP: S57 and R60. CTP contacts are provided by S57 and R60. 3 residues coordinate Mg(2+): D69, D71, and D124. Residues H147, K168, and Y177 each coordinate ATP. Positions 147, 168, and 177 each coordinate CTP.

The protein belongs to the tRNA nucleotidyltransferase/poly(A) polymerase family. Archaeal CCA-adding enzyme subfamily. Homodimer. Mg(2+) serves as cofactor.

The enzyme catalyses a tRNA precursor + 2 CTP + ATP = a tRNA with a 3' CCA end + 3 diphosphate. It carries out the reaction a tRNA with a 3' CCA end + 2 CTP + ATP = a tRNA with a 3' CCACCA end + 3 diphosphate. Its function is as follows. Catalyzes the addition and repair of the essential 3'-terminal CCA sequence in tRNAs without using a nucleic acid template. Adds these three nucleotides in the order of C, C, and A to the tRNA nucleotide-73, using CTP and ATP as substrates and producing inorganic pyrophosphate. tRNA 3'-terminal CCA addition is required both for tRNA processing and repair. Also involved in tRNA surveillance by mediating tandem CCA addition to generate a CCACCA at the 3' terminus of unstable tRNAs. While stable tRNAs receive only 3'-terminal CCA, unstable tRNAs are marked with CCACCA and rapidly degraded. The protein is CCA-adding enzyme of Methanococcus maripaludis (strain DSM 14266 / JCM 13030 / NBRC 101832 / S2 / LL).